The primary structure comprises 130 residues: Iron-sulfur cluster insertion protein ErpA 2 (130 aa).

The iron-sulfur cluster site is built by Cys-58, Cys-122, and Cys-124.

The protein belongs to the HesB/IscA family. In terms of assembly, homodimer. The cofactor is iron-sulfur cluster.

Functionally, required for insertion of 4Fe-4S clusters for at least IspG. This Methylococcus capsulatus (strain ATCC 33009 / NCIMB 11132 / Bath) protein is Iron-sulfur cluster insertion protein ErpA 2.